The sequence spans 318 residues: Ribosomal RNA small subunit methyltransferase A (318 aa).

Residues Asn-40, Val-42, Gly-67, Glu-88, Asp-118, and Asn-137 each coordinate S-adenosyl-L-methionine. Basic and acidic residues predominate over residues 295-305 (SADRGGTDREG). Residues 295–318 (SADRGGTDREGTSPPTAGQGAPAR) are disordered.

This sequence belongs to the class I-like SAM-binding methyltransferase superfamily. rRNA adenine N(6)-methyltransferase family. RsmA subfamily.

It localises to the cytoplasm. The catalysed reaction is adenosine(1518)/adenosine(1519) in 16S rRNA + 4 S-adenosyl-L-methionine = N(6)-dimethyladenosine(1518)/N(6)-dimethyladenosine(1519) in 16S rRNA + 4 S-adenosyl-L-homocysteine + 4 H(+). Its function is as follows. Specifically dimethylates two adjacent adenosines (A1518 and A1519) in the loop of a conserved hairpin near the 3'-end of 16S rRNA in the 30S particle. May play a critical role in biogenesis of 30S subunits. The protein is Ribosomal RNA small subunit methyltransferase A of Mycolicibacterium paratuberculosis (strain ATCC BAA-968 / K-10) (Mycobacterium paratuberculosis).